The sequence spans 377 residues: Anhydro-N-acetylmuramic acid kinase (377 aa).

12–19 serves as a coordination point for ATP; the sequence is GTSLDGID.

This sequence belongs to the anhydro-N-acetylmuramic acid kinase family.

The enzyme catalyses 1,6-anhydro-N-acetyl-beta-muramate + ATP + H2O = N-acetyl-D-muramate 6-phosphate + ADP + H(+). It participates in amino-sugar metabolism; 1,6-anhydro-N-acetylmuramate degradation. The protein operates within cell wall biogenesis; peptidoglycan recycling. In terms of biological role, catalyzes the specific phosphorylation of 1,6-anhydro-N-acetylmuramic acid (anhMurNAc) with the simultaneous cleavage of the 1,6-anhydro ring, generating MurNAc-6-P. Is required for the utilization of anhMurNAc either imported from the medium or derived from its own cell wall murein, and thus plays a role in cell wall recycling. In Methylorubrum populi (strain ATCC BAA-705 / NCIMB 13946 / BJ001) (Methylobacterium populi), this protein is Anhydro-N-acetylmuramic acid kinase.